Consider the following 564-residue polypeptide: MDVDSIFKNTEETNKKRNPEEADSLEPASSRRRLAEENSDEENEEFDEEGGRFFGSGLKKSEKTVLDFLDEQEAQEEPASLTPTELKRMVVRLEKTINNNQELRIKYSTSPQRFIESEADLDLEIRSFNVLSEYPILIPIFLKLDCVSTFLELMNHENADITITVLELLIELTDEDVDPDALNSLFTSLIDSGLLPLLSNTIKRFDESNEEDRHGVYCVLSLMENLLSVDNSICSIIVENTTLVEWLLSRSSVDETSISTNLQYAVEILAIILANSKEAKLKVCNLNGIDLLLRRISPYRLRDPTQGSEEEMMENVFDCLCSLVQETKGKSLFLKEEGIELCILNMKHKGKSRYSTIKVLDYLLFGPLSTPYCIRFVEAGGLKYIFAAFMKISAADTLEHILAILASLFRSLPADTVERVRFLRKFIENDFEKMKRLFKIYDRLRIQLKGIDQSRKLDFSPDSEEKSTKWFLQQIDHGLFPFQSTVLILSWLCVENTVTLKKIKMLFSEASIPIDELTDALKNYHENLEEPTVESEEVEANDSYYRIDEKPMVTVLLGSMQASV.

The disordered stretch occupies residues 1 to 56; it reads MDVDSIFKNTEETNKKRNPEEADSLEPASSRRRLAEENSDEENEEFDEEGGRFFGS. Residues 9-20 show a composition bias toward basic and acidic residues; that stretch reads NTEETNKKRNPE. Residues 37-48 are compositionally biased toward acidic residues; sequence ENSDEENEEFDE. Serine 39 is modified (phosphoserine). 2 HEAT repeats span residues 83-133 and 138-177; these read PTEL…VLSE and IPIFLKLDCVSTFLELMNHENADITITVLELLIELTDEDV. ARM repeat units follow at residues 179–229, 230–276, 277–326, 328–366, and 367–411; these read PDAL…LLSV, DNSI…LANS, KEAK…LVQE, KGKSLFLKEEGIELCILNMKHKGKSRYSTIKVLDYLLFG, and PLST…LFRS. Residues 465–528 are a coiled coil; it reads EKSTKWFLQQ…DALKNYHENL (64 aa).

The protein resides in the nucleus. Probable spliceosomal component involved in the activation of pre-mRNA splicing. The protein is Beta-catenin-like protein 1 homolog (ctnnbl1) of Schizosaccharomyces pombe (strain 972 / ATCC 24843) (Fission yeast).